The following is a 222-amino-acid chain: Polyadenylate-binding protein 2 (222 aa).

Residues Met-1–Glu-43 are disordered. Over residues Val-10–Ile-24 the composition is skewed to basic and acidic residues. The 78-residue stretch at Arg-101–Thr-178 folds into the RRM domain.

It is found in the nucleus. Its function is as follows. Involved in the 3'-end formation of mRNA precursors (pre-mRNA) by the addition of a poly(A) tail of 200-250 nt to the upstream cleavage product. The chain is Polyadenylate-binding protein 2 (pabpn1) from Dictyostelium discoideum (Social amoeba).